The primary structure comprises 226 residues: Phosphoribosylformylglycinamidine synthase subunit PurQ (226 aa).

Residues 3 to 225 (FAVIVFPGSN…VKWGARHVTY (223 aa)) form the Glutamine amidotransferase type-1 domain. Catalysis depends on Cys-86, which acts as the Nucleophile. Active-site residues include His-194 and Glu-196.

As to quaternary structure, part of the FGAM synthase complex composed of 1 PurL, 1 PurQ and 2 PurS subunits.

Its subcellular location is the cytoplasm. The catalysed reaction is N(2)-formyl-N(1)-(5-phospho-beta-D-ribosyl)glycinamide + L-glutamine + ATP + H2O = 2-formamido-N(1)-(5-O-phospho-beta-D-ribosyl)acetamidine + L-glutamate + ADP + phosphate + H(+). It catalyses the reaction L-glutamine + H2O = L-glutamate + NH4(+). It functions in the pathway purine metabolism; IMP biosynthesis via de novo pathway; 5-amino-1-(5-phospho-D-ribosyl)imidazole from N(2)-formyl-N(1)-(5-phospho-D-ribosyl)glycinamide: step 1/2. Functionally, part of the phosphoribosylformylglycinamidine synthase complex involved in the purines biosynthetic pathway. Catalyzes the ATP-dependent conversion of formylglycinamide ribonucleotide (FGAR) and glutamine to yield formylglycinamidine ribonucleotide (FGAM) and glutamate. The FGAM synthase complex is composed of three subunits. PurQ produces an ammonia molecule by converting glutamine to glutamate. PurL transfers the ammonia molecule to FGAR to form FGAM in an ATP-dependent manner. PurS interacts with PurQ and PurL and is thought to assist in the transfer of the ammonia molecule from PurQ to PurL. This is Phosphoribosylformylglycinamidine synthase subunit PurQ from Exiguobacterium sp. (strain ATCC BAA-1283 / AT1b).